A 102-amino-acid chain; its full sequence is UPF0058 protein MTH_224 (102 aa).

This sequence belongs to the UPF0058 family.

In Methanothermobacter thermautotrophicus (strain ATCC 29096 / DSM 1053 / JCM 10044 / NBRC 100330 / Delta H) (Methanobacterium thermoautotrophicum), this protein is UPF0058 protein MTH_224.